Here is a 176-residue protein sequence, read N- to C-terminus: MDLPGPIHEILVLFLGFVLLLGGLGVVLLTNPIYSAFSLGLVLVCISLFYFLLNSYFVAVAQLLIYVGAINVLIIFAVMFVNGSEWSKDKNSWTIGDGFTSLVCITIVFSLMTTIPDTSWYGILWTTRSNQIVEQGLINNVQQIGIHLATDFYLPFELISIILLVSLIGAITMARQ.

Helical transmembrane passes span isoleucine 10 to threonine 30, isoleucine 33 to leucine 53, valine 60 to phenylalanine 80, isoleucine 95 to isoleucine 115, and phenylalanine 152 to threonine 172.

This sequence belongs to the complex I subunit 6 family. As to quaternary structure, NDH is composed of at least 16 different subunits, 5 of which are encoded in the nucleus.

Its subcellular location is the plastid. The protein localises to the chloroplast thylakoid membrane. The enzyme catalyses a plastoquinone + NADH + (n+1) H(+)(in) = a plastoquinol + NAD(+) + n H(+)(out). It catalyses the reaction a plastoquinone + NADPH + (n+1) H(+)(in) = a plastoquinol + NADP(+) + n H(+)(out). Functionally, NDH shuttles electrons from NAD(P)H:plastoquinone, via FMN and iron-sulfur (Fe-S) centers, to quinones in the photosynthetic chain and possibly in a chloroplast respiratory chain. The immediate electron acceptor for the enzyme in this species is believed to be plastoquinone. Couples the redox reaction to proton translocation, and thus conserves the redox energy in a proton gradient. This is NAD(P)H-quinone oxidoreductase subunit 6, chloroplastic (ndhG) from Brachypodium distachyon (Purple false brome).